A 392-amino-acid polypeptide reads, in one-letter code: NDP-glycosyltransferase YjiC (392 aa).

Residues Asn-18, Thr-229, Ser-255, Val-278, His-293, and 297–301 (NSTME) contribute to the UDP site.

The protein belongs to the UDP-glycosyltransferase family. Monomer.

It catalyses the reaction an NDP-glycose + an acceptor = a glycosylated acceptor + NDP.. Its activity is regulated as follows. Activity is improved in the presence of Mn(2+), Mg(2+) and Ca(2+), and inhibited by Ni(2+), Zn(2+) and Cu(2+). Glycosyltransferase that can glycosylate a wide range of substrates, including various flavonoids, phenyl ketones, curcuminoid, lignins, zingerone, triterpenes, stilbene and anthraquinone, using UDP-glucose or ADP-glucose as sugar donor. It also exhibits O-, N- and S-glycosylation activities towards simple aromatics. In vivo, the broad acceptor tolerance of YjiC might function as a detoxification agent against exogenous xenobiotics to make the strain adaptable to the changeable environment. This Bacillus subtilis (strain 168) protein is NDP-glycosyltransferase YjiC (yjiC).